The primary structure comprises 427 residues: Ribose-phosphate pyrophosphokinase 1 (427 aa).

Mg(2+)-binding residues include Asp128, His130, and Asp143. A phosphoserine mark is found at Ser199, Ser218, Ser271, and Ser295.

This sequence belongs to the ribose-phosphate pyrophosphokinase family.

Its subcellular location is the cytoplasm. The catalysed reaction is D-ribose 5-phosphate + ATP = 5-phospho-alpha-D-ribose 1-diphosphate + AMP + H(+). The protein operates within metabolic intermediate biosynthesis; 5-phospho-alpha-D-ribose 1-diphosphate biosynthesis; 5-phospho-alpha-D-ribose 1-diphosphate from D-ribose 5-phosphate (route I): step 1/1. In terms of biological role, 5-phosphoribose 1-diphosphate synthase involved in nucleotide, histidine, and tryptophan biosynthesis. Active in heteromultimeric complexes with other 5-phosphoribose 1-diphosphate synthases (PRS2, PRS3, PRS4 and PRS5). This is Ribose-phosphate pyrophosphokinase 1 (PRS1) from Saccharomyces cerevisiae (strain ATCC 204508 / S288c) (Baker's yeast).